Reading from the N-terminus, the 184-residue chain is Photosystem I assembly protein Ycf4 (184 aa).

2 helical membrane passes run phenylalanine 22–serine 42 and isoleucine 57–serine 77.

This sequence belongs to the Ycf4 family.

It localises to the plastid. Its subcellular location is the chloroplast thylakoid membrane. Functionally, seems to be required for the assembly of the photosystem I complex. The sequence is that of Photosystem I assembly protein Ycf4 from Olimarabidopsis pumila (Dwarf rocket).